A 299-amino-acid polypeptide reads, in one-letter code: Junctional adhesion molecule A (299 aa).

An N-terminal signal peptide occupies residues 1-27 (MGTKAQVERKLLCLFILAILLCSLALG). Ig-like V-type domains lie at 28-125 (SVTV…VKVK) and 135-228 (PTVN…NAVR). Topologically, residues 28-238 (SVTVHSSEPE…MEAVERNVGV (211 aa)) are extracellular. 2 disulfides stabilise this stretch: Cys-50-Cys-109 and Cys-153-Cys-212. A glycan (N-linked (GlcNAc...) asparagine) is linked at Asn-185. The helical transmembrane segment at 239–259 (IVAAVLVTLILLGILVFGIWF) threads the bilayer. Residues 260 to 299 (AYSRGHFDRTKKGTSSKKVIYSQPSARSEGEFKQTSSFLV) lie on the Cytoplasmic side of the membrane. Phosphoserine is present on residues Ser-281, Ser-284, and Ser-287.

It belongs to the immunoglobulin superfamily. In terms of assembly, interacts with the ninth PDZ domain of MPDZ. Interacts with the first PDZ domain of PARD3. The association between PARD3 and PARD6B probably disrupts this interaction. Interacts with ITGAL (via I-domain). Interacts with CD151. (Microbial infection) Interacts with Mammalian reovirus sigma-1 capsid protein. As to quaternary structure, (Microbial infection) Interacts with Human Rotavirus strain Wa vp4 capsid protein. In terms of processing, N-glycosylated. Post-translationally, (Microbial infection) Cleaved by H.pylori virulence factor PqqE. Cleavage leads to altered tight junction functions. Expressed in endothelium, epithelium and leukocytes (at protein level).

It is found in the cell junction. The protein localises to the tight junction. Its subcellular location is the cell membrane. In terms of biological role, seems to play a role in epithelial tight junction formation. Appears early in primordial forms of cell junctions and recruits PARD3. The association of the PARD6-PARD3 complex may prevent the interaction of PARD3 with JAM1, thereby preventing tight junction assembly. Plays a role in regulating monocyte transmigration involved in integrity of epithelial barrier. Ligand for integrin alpha-L/beta-2 involved in memory T-cell and neutrophil transmigration. Involved in platelet activation. Its function is as follows. (Microbial infection) Acts as a receptor for Mammalian reovirus sigma-1. Functionally, (Microbial infection) Acts as a receptor for Human Rotavirus strain Wa. The protein is Junctional adhesion molecule A (F11R) of Homo sapiens (Human).